The sequence spans 136 residues: Mediator of RNA polymerase II transcription subunit 22 (136 aa).

The protein belongs to the Mediator complex subunit 22 family. Component of the Mediator complex.

It localises to the nucleus. Functionally, component of the Mediator complex, a coactivator involved in the regulated transcription of nearly all RNA polymerase II-dependent genes. Mediator functions as a bridge to convey information from gene-specific regulatory proteins to the basal RNA polymerase II transcription machinery. Mediator is recruited to promoters by direct interactions with regulatory proteins and serves as a scaffold for the assembly of a functional preinitiation complex with RNA polymerase II and the general transcription factors. The protein is Mediator of RNA polymerase II transcription subunit 22 (med22) of Schizosaccharomyces pombe (strain 972 / ATCC 24843) (Fission yeast).